The sequence spans 462 residues: TNF receptor-associated factor family protein DDB_G0267754 (462 aa).

An RING-type; degenerate zinc finger spans residues 24–62; it reads CCVCECLLIEALQCRNGHVACKNCFIKIVKSKKECMTCR. Residues 104–127 form a disordered region; the sequence is KNGNGNEGSSANEIEQPQQPQQQQ. TRAF-type zinc fingers lie at residues 150 to 217 and 214 to 273; these read SHLK…SHTE and SHTE…NQLA. Positions 326–449 constitute an MATH domain; sequence MFRGKWVISN…NDTLTINFSI (124 aa).

This sequence belongs to the TNF receptor-associated factor family. A subfamily.

The protein resides in the cytoplasm. Functionally, probable adapter protein and signal transducer that links members of the tumor necrosis factor receptor family to different signaling pathways by association with the receptor cytoplasmic domain and kinases. This chain is TNF receptor-associated factor family protein DDB_G0267754, found in Dictyostelium discoideum (Social amoeba).